The primary structure comprises 140 residues: Ribosome maturation factor RimP (140 aa).

The protein belongs to the RimP family.

Its subcellular location is the cytoplasm. Required for maturation of 30S ribosomal subunits. The protein is Ribosome maturation factor RimP of Campylobacter jejuni subsp. jejuni serotype O:2 (strain ATCC 700819 / NCTC 11168).